We begin with the raw amino-acid sequence, 741 residues long: Phage T7 exclusion protein (741 aa).

Positions 27 to 334 (FGNIAENISR…NSLIFLYPGM (308 aa)) constitute a KAP NTPase domain.

In terms of biological role, responsible for the exclusion of phage T7 by plasmid F. Growth of bacteriophage T7 is inhibited in cells of E.coli that carries the plasmid F. The chain is Phage T7 exclusion protein (pifA) from Escherichia coli (strain K12).